Consider the following 987-residue polypeptide: uncharacterized protein (987 aa).

The next 2 helical transmembrane spans lie at 12–32 (FIYLCILLFVFMASMLNSVSG) and 958–978 (VENNFEIFLILINVIFGLGIL).

This sequence to M.jannaschii MJ1393 and A.fulgidus AF2028.

The protein resides in the cell membrane. This is an uncharacterized protein from Methanocaldococcus jannaschii (strain ATCC 43067 / DSM 2661 / JAL-1 / JCM 10045 / NBRC 100440) (Methanococcus jannaschii).